The following is a 177-amino-acid chain: Interleukin-1 receptor antagonist protein (177 aa).

The N-terminal stretch at 1–25 (MEICRGLRSHLITLLLFLFHSETIC) is a signal peptide. Cysteine 91 and cysteine 141 are joined by a disulfide. Residue asparagine 109 is glycosylated (N-linked (GlcNAc...) asparagine).

Belongs to the IL-1 family. The intracellular form of IL1RN is predominantly expressed in epithelial cells.

Its subcellular location is the secreted. The protein resides in the cytoplasm. Its function is as follows. Anti-inflammatory antagonist of interleukin-1 family of proinflammatory cytokines such as interleukin-1beta/IL1B and interleukin-1alpha/IL1A. Protects from immune dysregulation and uncontrolled systemic inflammation triggered by IL1 for a range of innate stimulatory agents such as pathogens. This is Interleukin-1 receptor antagonist protein (IL1RN) from Homo sapiens (Human).